Reading from the N-terminus, the 272-residue chain is D-aminoacyl-tRNA deacylase (272 aa).

Monomer. Zn(2+) is required as a cofactor.

The enzyme catalyses a D-aminoacyl-tRNA + H2O = a tRNA + a D-alpha-amino acid + H(+). It carries out the reaction glycyl-tRNA(Ala) + H2O = tRNA(Ala) + glycine + H(+). It catalyses the reaction D-tyrosyl-tRNA(Tyr) + H2O = D-tyrosine + tRNA(Tyr). D-aminoacyl-tRNA deacylase with broad substrate specificity. By recycling D-aminoacyl-tRNA to D-amino acids and free tRNA molecules, this enzyme counteracts the toxicity associated with the formation of D-aminoacyl-tRNA entities in vivo. Catalyzes the hydrolysis of D-tyrosyl-tRNA(Tyr) and D-aspartyl-tRNA(Asp). This Pyrococcus abyssi (strain GE5 / Orsay) protein is D-aminoacyl-tRNA deacylase.